We begin with the raw amino-acid sequence, 500 residues long: Beta-xylosidase (500 aa).

Residue Glu160 is the Proton donor of the active site. The active-site Nucleophile is Glu277.

The protein belongs to the glycosyl hydrolase 39 family.

The catalysed reaction is Hydrolysis of (1-&gt;4)-beta-D-xylans, to remove successive D-xylose residues from the non-reducing termini.. The sequence is that of Beta-xylosidase (xynB) from Thermoanaerobacterium saccharolyticum (strain DSM 8691 / JW/SL-YS485).